Consider the following 134-residue polypeptide: Ion transport peptide-like (134 aa).

3 disulfides stabilise this stretch: C62–C98, C78–C94, and C81–C107.

This sequence belongs to the arthropod CHH/MIH/GIH/VIH hormone family.

It localises to the secreted. In Schistocerca gregaria (Desert locust), this protein is Ion transport peptide-like.